A 328-amino-acid chain; its full sequence is Probable cell division protein WhiA (328 aa).

A DNA-binding region (H-T-H motif) is located at residues 276–309 (SLEELGRLADPQMTKDAVAGRIRRLLHMADKKAS).

It belongs to the WhiA family.

In terms of biological role, involved in cell division and chromosome segregation. In Corynebacterium diphtheriae (strain ATCC 700971 / NCTC 13129 / Biotype gravis), this protein is Probable cell division protein WhiA.